The primary structure comprises 519 residues: Cytosol aminopeptidase (519 aa).

An N6-succinyllysine modification is found at K45. The residue at position 54 (S54) is a Phosphoserine. 2 positions are modified to N6-succinyllysine: K61 and K103. 2 positions are modified to phosphoserine: S180 and S194. Zn(2+) is bound by residues L202 and M203. N6-acetyllysine; alternate is present on K221. K221 is modified (N6-succinyllysine; alternate). S238 is subject to Phosphoserine. 2 residues coordinate Zn(2+): K282 and D287. Positions 282, 287, 292, and 294 each coordinate substrate. A Mg(2+)-binding site is contributed by D287. K294 is an active-site residue. Residues R303, D305, D364, and E366 each coordinate Zn(2+). Substrate contacts are provided by D305 and D364. Residues D364 and E366 each coordinate Mg(2+). R368 is a catalytic residue. The residue at position 455 (K455) is an N6-acetyllysine; alternate. At K455 the chain carries N6-succinyllysine; alternate. The residue at position 476 (K476) is an N6-succinyllysine. At K489 the chain carries N6-acetyllysine; alternate. K489 is subject to N6-succinyllysine; alternate.

Belongs to the peptidase M17 family. In terms of assembly, homohexamer. The cofactor is Zn(2+). Requires Mn(2+) as cofactor.

The protein localises to the cytoplasm. The catalysed reaction is Release of an N-terminal amino acid, Xaa-|-Yaa-, in which Xaa is preferably Leu, but may be other amino acids including Pro although not Arg or Lys, and Yaa may be Pro. Amino acid amides and methyl esters are also readily hydrolyzed, but rates on arylamides are exceedingly low.. It catalyses the reaction an S-substituted L-cysteinylglycine + H2O = an S-substituted L-cysteine + glycine. It carries out the reaction L-cysteinylglycine + H2O = L-cysteine + glycine. The enzyme catalyses S-benzyl-L-cysteinylglycine + H2O = S-benzyl-L-cysteine + glycine. The catalysed reaction is Release of N-terminal proline from a peptide.. Cytosolic metallopeptidase that catalyzes the removal of unsubstituted N-terminal hydrophobic amino acids from various peptides. The presence of Zn(2+) ions is essential for the peptidase activity, and the association with other cofactors can modulate the substrate spectificity of the enzyme. For instance, in the presence of Mn(2+), it displays a specific Cys-Gly hydrolyzing activity of Cys-Gly-S-conjugates. Involved in the metabolism of glutathione and in the degradation of glutathione S-conjugates, which may play a role in the control of the cell redox status. This is Cytosol aminopeptidase from Mus musculus (Mouse).